The chain runs to 772 residues: Chondroitin sulfate glucuronyltransferase (772 aa).

The Cytoplasmic segment spans residues 1–6; it reads MRLSSL. A helical; Signal-anchor for type II membrane protein transmembrane segment spans residues 7–29; the sequence is LALLRPALPLILGLSLGCSLSLL. The Lumenal segment spans residues 30–772; the sequence is RVSWIQGEGE…LFEQEQANST (743 aa). N-linked (GlcNAc...) asparagine glycosylation is found at N121 and N342. The disordered stretch occupies residues 629-662; the sequence is ALSPQRSPPGPPGAGPDPPSPPGADPSRGAPIGG. Pro residues predominate over residues 634 to 652; it reads RSPPGPPGAGPDPPSPPGA.

This sequence belongs to the chondroitin N-acetylgalactosaminyltransferase family. In terms of tissue distribution, ubiquitous. Highly expressed in placenta, small intestine and pancreas.

The protein localises to the golgi apparatus. It localises to the golgi stack membrane. The catalysed reaction is 3-O-(beta-D-GalNAc-(1-&gt;4)-beta-D-GlcA-(1-&gt;3)-beta-D-Gal-(1-&gt;3)-beta-D-Gal-(1-&gt;4)-beta-D-Xyl)-L-seryl-[protein] + UDP-alpha-D-glucuronate = 3-O-(beta-D-GlcA-(1-&gt;3)-beta-D-GalNAc-(1-&gt;4)-beta-D-GlcA-(1-&gt;3)-beta-D-Gal-(1-&gt;3)-beta-D-Gal-(1-&gt;4)-beta-D-Xyl)-L-seryl-[protein] + UDP + H(+). It catalyses the reaction 3-O-{[beta-D-GalNAc-(1-&gt;4)-beta-D-GlcA-(1-&gt;3)](n)-beta-D-GalNAc-(1-&gt;4)-beta-D-GlcA-(1-&gt;3)-beta-D-Gal-(1-&gt;3)-beta-D-Gal-(1-&gt;4)-beta-D-Xyl}-L-seryl-[protein] + UDP-alpha-D-glucuronate = 3-O-{beta-D-GlcA-(1-&gt;3)-[beta-D-GalNAc-(1-&gt;4)-beta-D-GlcA-(1-&gt;3)](n)-beta-D-GalNAc-(1-&gt;4)-beta-D-GlcA-(1-&gt;3)-beta-D-Gal-(1-&gt;3)-beta-D-Gal-(1-&gt;4)-beta-D-Xyl}-L-seryl-[protein] + UDP + H(+). Functionally, transfers glucuronic acid (GlcUA) from UDP-GlcUA to N-acetylgalactosamine residues on the non-reducing end of the elongating chondroitin polymer. Has no N-acetylgalactosaminyltransferase activity. The protein is Chondroitin sulfate glucuronyltransferase (CHPF2) of Homo sapiens (Human).